The following is a 606-amino-acid chain: Fructan 6-exohydrolase (606 aa).

The first 21 residues, 1-21, serve as a signal peptide directing secretion; the sequence is MAPNNGSWLVLSISMMLLSHG. Asn-5 carries N-linked (GlcNAc...) asparagine glycosylation. Residue Asp-70 is part of the active site. Residues Asn-110, Asn-164, Asn-193, Asn-237, and Asn-346 are each glycosylated (N-linked (GlcNAc...) asparagine). Cys-445 and Cys-491 form a disulfide bridge. N-linked (GlcNAc...) asparagine glycosylation is found at Asn-564, Asn-585, Asn-590, and Asn-593.

This sequence belongs to the glycosyl hydrolase 32 family.

The catalysed reaction is Hydrolysis of terminal, non-reducing (2-&gt;6)-linked beta-D-fructofuranose residues in fructans.. Not inhibited by sucrose. Its function is as follows. Hydrolyzes levan-type beta-(2-&gt;6)-linked fructans to fructose, but not inulin-type beta-(2-&gt;1)-linked fructans. This chain is Fructan 6-exohydrolase, found in Beta vulgaris (Sugar beet).